Here is a 177-residue protein sequence, read N- to C-terminus: Nucleoside triphosphate/diphosphate phosphatase (177 aa).

Catalysis depends on Arg24, which acts as the Proton donor. Positions 88, 104, 106, 108, 121, and 124 each coordinate Mg(2+).

It belongs to the Ntdp family. Requires Mg(2+) as cofactor.

It catalyses the reaction a ribonucleoside 5'-triphosphate + H2O = a ribonucleoside 5'-diphosphate + phosphate + H(+). The enzyme catalyses a ribonucleoside 5'-diphosphate + H2O = a ribonucleoside 5'-phosphate + phosphate + H(+). In terms of biological role, has nucleoside phosphatase activity towards nucleoside triphosphates and nucleoside diphosphates. This is Nucleoside triphosphate/diphosphate phosphatase from Geobacillus sp. (strain WCH70).